The chain runs to 152 residues: Cytochrome c-type biogenesis CcmH-like mitochondrial protein (152 aa).

The Mitochondrial intermembrane portion of the chain corresponds to Met-1–Gln-83. Heme-binding residues include Cys-26 and Cys-29. Residues Thr-84–Tyr-104 traverse the membrane as a helical segment. Residues Lys-105 to Lys-152 are Mitochondrial matrix-facing.

The protein belongs to the CcmH/CycL/Ccl2/NrfF family.

Its subcellular location is the mitochondrion inner membrane. In terms of biological role, plays a role in mitochondrial cytochrome c maturation. Probable component of a heme lyase complex involved in the reduction of apocytochrome c. This Oryza sativa subsp. indica (Rice) protein is Cytochrome c-type biogenesis CcmH-like mitochondrial protein.